Here is a 235-residue protein sequence, read N- to C-terminus: Replication protein (235 aa).

Tyr-149 contacts DNA.

This sequence belongs to the Gram-positive plasmids replication protein type 1 family.

Functionally, produces a single-strand nick in a specific site of the plasmid, and this nick results in single-strand replication by rolling circle mechanism. The polypeptide is Replication protein (repB) (Bacillus sp).